We begin with the raw amino-acid sequence, 366 residues long: Rab9 effector protein with kelch motifs (366 aa).

Kelch repeat units follow at residues 49-95, 100-146, 151-200, 204-253, 254-303, and 343-366; these read KILI…FISA, NIWV…TSSA, KLYV…VLTA, KLFV…AWKS, YIYI…LLPW, and LCFI…TILQ.

Rab9 effector required for endosome to trans-Golgi network (TGN) transport. The sequence is that of Rab9 effector protein with kelch motifs (rabepk) from Xenopus laevis (African clawed frog).